The chain runs to 143 residues: D-aminoacyl-tRNA deacylase (143 aa).

The Gly-cisPro motif, important for rejection of L-amino acids motif lies at 135 to 136 (GP).

Belongs to the DTD family. In terms of assembly, homodimer.

The protein localises to the cytoplasm. It catalyses the reaction glycyl-tRNA(Ala) + H2O = tRNA(Ala) + glycine + H(+). The catalysed reaction is a D-aminoacyl-tRNA + H2O = a tRNA + a D-alpha-amino acid + H(+). Functionally, an aminoacyl-tRNA editing enzyme that deacylates mischarged D-aminoacyl-tRNAs. Also deacylates mischarged glycyl-tRNA(Ala), protecting cells against glycine mischarging by AlaRS. Acts via tRNA-based rather than protein-based catalysis; rejects L-amino acids rather than detecting D-amino acids in the active site. By recycling D-aminoacyl-tRNA to D-amino acids and free tRNA molecules, this enzyme counteracts the toxicity associated with the formation of D-aminoacyl-tRNA entities in vivo and helps enforce protein L-homochirality. This Mycolicibacterium smegmatis (strain ATCC 700084 / mc(2)155) (Mycobacterium smegmatis) protein is D-aminoacyl-tRNA deacylase.